A 1682-amino-acid polypeptide reads, in one-letter code: Calmodulin-binding transcription activator 1 (1682 aa).

Residues 63 to 188 (KCSSLPKERH…YLNVPAIEDC (126 aa)) constitute a DNA-binding region (CG-1). Residues 112–119 (RKKVKYRK) carry the Nuclear localization signal motif. 2 disordered regions span residues 284 to 375 (RIIS…MVDS) and 599 to 622 (SSFS…FLQD). Positions 302-327 (EVQHNDVSEGKHEPSHGRSTSREKRN) are enriched in basic and acidic residues. Composition is skewed to polar residues over residues 337 to 367 (HQNS…SGLN) and 599 to 618 (SSFS…SPSF). Residues 877–955 (DYSPEWSYPE…ISNSVVFEYK (79 aa)) form the IPT/TIG domain. The disordered stretch occupies residues 992–1020 (MAEMTGSQQHKQASGGGGSGSGSGSGAGG). The span at 1005–1020 (SGGGGSGSGSGSGAGG) shows a compositional bias: gly residues. ANK repeat units follow at residues 1066 to 1095 (RGMT…KHAD), 1111 to 1141 (FSCT…AISI), and 1145 to 1174 (LGRL…DEQA). Disordered stretches follow at residues 1217–1249 (ASTN…KKHK) and 1267–1318 (LSLE…SASQ). A compositionally biased stretch (polar residues) spans 1268–1291 (SLEQPNIRKQSPRSKQPSPETISP). Positions 1308–1318 (ETAASQASASQ) are enriched in low complexity. 3 consecutive IQ domains span residues 1549-1585 (QEVA…AAIL), 1586-1608 (IQSK…AAVL), and 1609-1631 (IQNF…TAVI).

It belongs to the CAMTA family. In terms of assembly, may interact with calmodulin.

It localises to the nucleus. Its subcellular location is the cytoplasm. Functionally, transcriptional activator. In Mus musculus (Mouse), this protein is Calmodulin-binding transcription activator 1.